A 448-amino-acid chain; its full sequence is Methionine aminopeptidase 2 (448 aa).

The disordered stretch occupies residues 1-94 (MAAQVTDALK…PRVLLSNLFP (94 aa)). Residues 37–50 (AEAEDSDDDDEEPV) show a composition bias toward acidic residues. Residues 61 to 74 (KKKRKRKKKPKKKA) are compositionally biased toward basic residues. His201 serves as a coordination point for substrate. Positions 221, 232, and 301 each coordinate a divalent metal cation. A substrate-binding site is contributed by His309. A divalent metal cation is bound by residues Glu334 and Glu429.

Belongs to the peptidase M24A family. Methionine aminopeptidase eukaryotic type 2 subfamily. The cofactor is Co(2+). Zn(2+) serves as cofactor. Requires Mn(2+) as cofactor. It depends on Fe(2+) as a cofactor.

Its subcellular location is the cytoplasm. The enzyme catalyses Release of N-terminal amino acids, preferentially methionine, from peptides and arylamides.. Its function is as follows. Cotranslationally removes the N-terminal methionine from nascent proteins. The N-terminal methionine is often cleaved when the second residue in the primary sequence is small and uncharged (Met-Ala-, Cys, Gly, Pro, Ser, Thr, or Val). This Botryotinia fuckeliana (strain B05.10) (Noble rot fungus) protein is Methionine aminopeptidase 2.